The following is a 37-amino-acid chain: Cytochrome b6-f complex subunit 5 (37 aa).

The helical transmembrane segment at 5–25 (LLSGIVLGLIPVTLAGLFVTA) threads the bilayer.

The protein belongs to the PetG family. As to quaternary structure, the 4 large subunits of the cytochrome b6-f complex are cytochrome b6, subunit IV (17 kDa polypeptide, PetD), cytochrome f and the Rieske protein, while the 4 small subunits are PetG, PetL, PetM and PetN. The complex functions as a dimer.

Its subcellular location is the plastid. It localises to the chloroplast thylakoid membrane. Its function is as follows. Component of the cytochrome b6-f complex, which mediates electron transfer between photosystem II (PSII) and photosystem I (PSI), cyclic electron flow around PSI, and state transitions. PetG is required for either the stability or assembly of the cytochrome b6-f complex. This chain is Cytochrome b6-f complex subunit 5, found in Chlorokybus atmophyticus (Soil alga).